The primary structure comprises 122 residues: Large ribosomal subunit protein uL14 (122 aa).

It belongs to the universal ribosomal protein uL14 family. Part of the 50S ribosomal subunit. Forms a cluster with proteins L3 and L19. In the 70S ribosome, L14 and L19 interact and together make contacts with the 16S rRNA in bridges B5 and B8.

In terms of biological role, binds to 23S rRNA. Forms part of two intersubunit bridges in the 70S ribosome. In Lawsonia intracellularis (strain PHE/MN1-00), this protein is Large ribosomal subunit protein uL14.